We begin with the raw amino-acid sequence, 369 residues long: MKTPTLGQLATENGAQVVGDPDLAVVGLAPLDQAGPGDLSFLSNPLYLPQALASAAGAVIVSPADLERIRADGQAEGRNWLVARNPYVCFARVAQRFDRAANADSRTGIDPRASVAPDAVVPASCFIGPNVVIESGARLGERVRILANAFIGASAEIGEDTLIYANVSVYHRCVIGARNILHSGAVIGADGFGFAPDIGPTGVEYVKIPQVGRAVLGNDVEIGANTAVDRGAMADTVIEDGCKIDNQVQIAHNVHVGAHTVIAGTAAVSGSTKIGRFCVIGGAANFSGHLNIADRTTVSGGTSITKSITKPGGHYTSVFPFTSHGEWERNAAIVRGLSKLRERVVQLERRQRGENNAPAQNKQDEEKSS.

H252 functions as the Proton acceptor in the catalytic mechanism. A disordered region spans residues 348–369 (ERRQRGENNAPAQNKQDEEKSS).

This sequence belongs to the transferase hexapeptide repeat family. LpxD subfamily. As to quaternary structure, homotrimer.

The catalysed reaction is a UDP-3-O-[(3R)-3-hydroxyacyl]-alpha-D-glucosamine + a (3R)-hydroxyacyl-[ACP] = a UDP-2-N,3-O-bis[(3R)-3-hydroxyacyl]-alpha-D-glucosamine + holo-[ACP] + H(+). Its pathway is bacterial outer membrane biogenesis; LPS lipid A biosynthesis. In terms of biological role, catalyzes the N-acylation of UDP-3-O-acylglucosamine using 3-hydroxyacyl-ACP as the acyl donor. Is involved in the biosynthesis of lipid A, a phosphorylated glycolipid that anchors the lipopolysaccharide to the outer membrane of the cell. The sequence is that of UDP-3-O-acylglucosamine N-acyltransferase from Cupriavidus metallidurans (strain ATCC 43123 / DSM 2839 / NBRC 102507 / CH34) (Ralstonia metallidurans).